Here is a 296-residue protein sequence, read N- to C-terminus: Mycothiol acetyltransferase (296 aa).

N-acetyltransferase domains are found at residues 1-148 (MTEW…IRVD) and 151-296 (VTVR…YGRA). Glu34 contributes to the 1D-myo-inositol 2-(L-cysteinylamino)-2-deoxy-alpha-D-glucopyranoside binding site. Residues 79-81 (LVV) and 87-92 (RRGIGS) each bind acetyl-CoA. Residues Glu178, Lys219, and Glu229 each coordinate 1D-myo-inositol 2-(L-cysteinylamino)-2-deoxy-alpha-D-glucopyranoside. Acetyl-CoA is bound by residues 233 to 235 (VGV) and 240 to 246 (QGRGLGH). Position 267 (Tyr267) interacts with 1D-myo-inositol 2-(L-cysteinylamino)-2-deoxy-alpha-D-glucopyranoside. 272–277 (NQAALR) is a binding site for acetyl-CoA.

The protein belongs to the acetyltransferase family. MshD subfamily. Monomer.

The catalysed reaction is 1D-myo-inositol 2-(L-cysteinylamino)-2-deoxy-alpha-D-glucopyranoside + acetyl-CoA = mycothiol + CoA + H(+). Its function is as follows. Catalyzes the transfer of acetyl from acetyl-CoA to desacetylmycothiol (Cys-GlcN-Ins) to form mycothiol. The protein is Mycothiol acetyltransferase of Mycobacteroides abscessus (strain ATCC 19977 / DSM 44196 / CCUG 20993 / CIP 104536 / JCM 13569 / NCTC 13031 / TMC 1543 / L948) (Mycobacterium abscessus).